The sequence spans 468 residues: 3-isopropylmalate dehydratase large subunit (468 aa).

Cys349, Cys409, and Cys412 together coordinate [4Fe-4S] cluster.

The protein belongs to the aconitase/IPM isomerase family. LeuC type 1 subfamily. In terms of assembly, heterodimer of LeuC and LeuD. The cofactor is [4Fe-4S] cluster.

It carries out the reaction (2R,3S)-3-isopropylmalate = (2S)-2-isopropylmalate. The protein operates within amino-acid biosynthesis; L-leucine biosynthesis; L-leucine from 3-methyl-2-oxobutanoate: step 2/4. Functionally, catalyzes the isomerization between 2-isopropylmalate and 3-isopropylmalate, via the formation of 2-isopropylmaleate. This Shewanella baltica (strain OS155 / ATCC BAA-1091) protein is 3-isopropylmalate dehydratase large subunit.